The sequence spans 388 residues: Succinate--CoA ligase [ADP-forming] subunit beta (388 aa).

An ATP-grasp domain is found at 9–244 (KEILRKFGVA…LDEEDPAEIE (236 aa)). ATP-binding positions include K46, 53–55 (GRG), E99, A102, and E107. Mg(2+) is bound by residues N199 and D213. Substrate-binding positions include N264 and 321 to 323 (GIM).

It belongs to the succinate/malate CoA ligase beta subunit family. In terms of assembly, heterotetramer of two alpha and two beta subunits. Mg(2+) is required as a cofactor.

It catalyses the reaction succinate + ATP + CoA = succinyl-CoA + ADP + phosphate. The catalysed reaction is GTP + succinate + CoA = succinyl-CoA + GDP + phosphate. Its pathway is carbohydrate metabolism; tricarboxylic acid cycle; succinate from succinyl-CoA (ligase route): step 1/1. Succinyl-CoA synthetase functions in the citric acid cycle (TCA), coupling the hydrolysis of succinyl-CoA to the synthesis of either ATP or GTP and thus represents the only step of substrate-level phosphorylation in the TCA. The beta subunit provides nucleotide specificity of the enzyme and binds the substrate succinate, while the binding sites for coenzyme A and phosphate are found in the alpha subunit. In Burkholderia multivorans (strain ATCC 17616 / 249), this protein is Succinate--CoA ligase [ADP-forming] subunit beta.